The following is a 393-amino-acid chain: Cholinephosphotransferase 1 (393 aa).

Topologically, residues 1–40 (MGFFIPQSSLGNLKLYKYQSDDRSFLSNHVLRPFWRKFAT) are lumenal. A helical membrane pass occupies residues 41–61 (IFPLWMAPNLVTLLGFCFIIF). The Cytoplasmic segment spans residues 62-172 (NVLTTLYYDP…YHTHKLYLAE (111 aa)). A helical transmembrane segment spans residues 173–193 (FCGPVEGIIVLCISFIAVGIY). Residues 194–210 (GPQTIWHTKVAQFSWQD) lie on the Lumenal side of the membrane. Residues 211 to 231 (FVFDVETVHLMYAFCTGALIF) traverse the membrane as a helical segment. Over 232–263 (NIVTAHTNVVRYYESQSTKSATPSKTAENISK) the chain is Cytoplasmic. Residues 264–284 (AVNGLLPFFAYFSSIFTLVLI) form a helical membrane-spanning segment. Residue Gln285 is a topological domain, lumenal. A helical transmembrane segment spans residues 286-306 (PSFISLALILSIGFSVAFVVG). Over 307–320 (RMIIAHLTMQPFPM) the chain is Cytoplasmic. A helical membrane pass occupies residues 321–341 (VNFPFLIPTIQLVLYAFMVYV). Residues 342-348 (LDYQKGS) lie on the Lumenal side of the membrane. Residues 349 to 369 (IVSALVWMGLGLTLAIHGMFI) traverse the membrane as a helical segment. The Cytoplasmic segment spans residues 370–393 (NDIIYDITTFLDIYALSIKHPKEI).

The protein belongs to the CDP-alcohol phosphatidyltransferase class-I family. The cofactor is Mg(2+).

The protein localises to the microsome membrane. Its subcellular location is the endoplasmic reticulum membrane. The protein resides in the mitochondrion outer membrane. The enzyme catalyses CDP-choline + a 1,2-diacyl-sn-glycerol = a 1,2-diacyl-sn-glycero-3-phosphocholine + CMP + H(+). The catalysed reaction is CDP-N,N-dimethylethanolamine + a 1,2-diacyl-sn-glycerol = a 1,2-diacyl-sn-glycero-3-phospho-N,N-dimethylethanolamine + CMP + H(+). Its pathway is phospholipid metabolism; phosphatidylcholine biosynthesis; phosphatidylcholine from phosphocholine: step 2/2. With respect to regulation, requires a divalent cation activator, and is inhibited by CMP. Activated by phospholipids, especially phosphatidylcholine. Functionally, catalyzes the final step in the CDP-choline route leading to phosphatidylcholin (PC). Preferentially uses CDP-monomethylethanolamine as aminoalcohol substrate. Shows highest activity toward di- and mono-unsaturated diacylglycerol species as lipid substrates. The CDP-choline pathway only contributes to net PC synthesis if exogenous choline is present. In its absence, this pathway recycles choline from PC turnover and may contribute to maintaining the proper PC species composition. In Saccharomyces cerevisiae (strain ATCC 204508 / S288c) (Baker's yeast), this protein is Cholinephosphotransferase 1 (CPT1).